Consider the following 373-residue polypeptide: Anhydro-N-acetylmuramic acid kinase (373 aa).

12 to 19 (GTSLDGVD) is an ATP binding site.

Belongs to the anhydro-N-acetylmuramic acid kinase family.

It catalyses the reaction 1,6-anhydro-N-acetyl-beta-muramate + ATP + H2O = N-acetyl-D-muramate 6-phosphate + ADP + H(+). It participates in amino-sugar metabolism; 1,6-anhydro-N-acetylmuramate degradation. The protein operates within cell wall biogenesis; peptidoglycan recycling. Functionally, catalyzes the specific phosphorylation of 1,6-anhydro-N-acetylmuramic acid (anhMurNAc) with the simultaneous cleavage of the 1,6-anhydro ring, generating MurNAc-6-P. Is required for the utilization of anhMurNAc either imported from the medium or derived from its own cell wall murein, and thus plays a role in cell wall recycling. The sequence is that of Anhydro-N-acetylmuramic acid kinase from Salmonella agona (strain SL483).